Here is a 105-residue protein sequence, read N- to C-terminus: Heat shock protein HspQ (105 aa).

Belongs to the HspQ family.

It localises to the cytoplasm. Involved in the degradation of certain denaturated proteins, including DnaA, during heat shock stress. This Salmonella choleraesuis (strain SC-B67) protein is Heat shock protein HspQ.